The sequence spans 319 residues: Thioredoxin reductase 1 (319 aa).

Residues 11-14 (SGPA), 40-41 (IA), Gln45, Asn54, Val87, Cys145, Asp288, and 295-297 (RQA) each bind FAD. An intrachain disulfide couples Cys142 to Cys145. Phosphoserine is present on Ser303.

It belongs to the class-II pyridine nucleotide-disulfide oxidoreductase family. Homodimer. Requires FAD as cofactor.

The protein resides in the cytoplasm. It localises to the mitochondrion intermembrane space. It carries out the reaction [thioredoxin]-dithiol + NADP(+) = [thioredoxin]-disulfide + NADPH + H(+). Functionally, central component in the thioredoxin system. Reduces thioredoxins 1 and 2. The chain is Thioredoxin reductase 1 (TRR1) from Saccharomyces cerevisiae (strain ATCC 204508 / S288c) (Baker's yeast).